The primary structure comprises 493 residues: Vacuolar-processing enzyme (493 aa).

The signal sequence occupies residues 1–19; sequence MGSSQLSTLLFFTIVVTFL. The N-linked (GlcNAc...) asparagine glycan is linked to asparagine 147. Histidine 174 is a catalytic residue. Cysteine 216 serves as the catalytic Nucleophile. A disulfide bridge links cysteine 249 with cysteine 263. N-linked (GlcNAc...) asparagine glycosylation is found at asparagine 295 and asparagine 331. Disulfide bonds link cysteine 429–cysteine 459 and cysteine 441–cysteine 476.

It belongs to the peptidase C13 family.

Asparagine-specific endopeptidase involved in the processing of vacuolar seed protein precursors into the mature forms. This Vicia sativa (Spring vetch) protein is Vacuolar-processing enzyme.